The sequence spans 424 residues: Light-independent protochlorophyllide reductase subunit N (424 aa).

Cysteine 26, cysteine 51, and cysteine 112 together coordinate [4Fe-4S] cluster.

The protein belongs to the BchN/ChlN family. As to quaternary structure, protochlorophyllide reductase is composed of three subunits; BchL, BchN and BchB. Forms a heterotetramer of two BchB and two BchN subunits. It depends on [4Fe-4S] cluster as a cofactor.

The catalysed reaction is chlorophyllide a + oxidized 2[4Fe-4S]-[ferredoxin] + 2 ADP + 2 phosphate = protochlorophyllide a + reduced 2[4Fe-4S]-[ferredoxin] + 2 ATP + 2 H2O. It functions in the pathway porphyrin-containing compound metabolism; bacteriochlorophyll biosynthesis (light-independent). In terms of biological role, component of the dark-operative protochlorophyllide reductase (DPOR) that uses Mg-ATP and reduced ferredoxin to reduce ring D of protochlorophyllide (Pchlide) to form chlorophyllide a (Chlide). This reaction is light-independent. The NB-protein (BchN-BchB) is the catalytic component of the complex. The sequence is that of Light-independent protochlorophyllide reductase subunit N from Rhodobacter capsulatus (strain ATCC BAA-309 / NBRC 16581 / SB1003).